The primary structure comprises 364 residues: Chorismate synthase (364 aa).

Arg48 and Arg54 together coordinate NADP(+). Residues 125–127 (RSS), 238–239 (NA), Gly278, 293–297 (KPTSS), and Arg319 each bind FMN.

The protein belongs to the chorismate synthase family. In terms of assembly, homotetramer. FMNH2 is required as a cofactor.

The enzyme catalyses 5-O-(1-carboxyvinyl)-3-phosphoshikimate = chorismate + phosphate. Its pathway is metabolic intermediate biosynthesis; chorismate biosynthesis; chorismate from D-erythrose 4-phosphate and phosphoenolpyruvate: step 7/7. Its function is as follows. Catalyzes the anti-1,4-elimination of the C-3 phosphate and the C-6 proR hydrogen from 5-enolpyruvylshikimate-3-phosphate (EPSP) to yield chorismate, which is the branch point compound that serves as the starting substrate for the three terminal pathways of aromatic amino acid biosynthesis. This reaction introduces a second double bond into the aromatic ring system. This chain is Chorismate synthase, found in Shewanella frigidimarina (strain NCIMB 400).